A 177-amino-acid chain; its full sequence is Large ribosomal subunit protein uL6 (177 aa).

It belongs to the universal ribosomal protein uL6 family. Part of the 50S ribosomal subunit.

Its function is as follows. This protein binds to the 23S rRNA, and is important in its secondary structure. It is located near the subunit interface in the base of the L7/L12 stalk, and near the tRNA binding site of the peptidyltransferase center. This chain is Large ribosomal subunit protein uL6, found in Salmonella newport (strain SL254).